A 92-amino-acid chain; its full sequence is uncharacterized protein (92 aa).

3 helical membrane-spanning segments follow: residues Met1–Leu21, Ile29–Leu49, and Ile51–Leu71.

It localises to the cell membrane. This is an uncharacterized protein from Methanocaldococcus jannaschii (strain ATCC 43067 / DSM 2661 / JAL-1 / JCM 10045 / NBRC 100440) (Methanococcus jannaschii).